Reading from the N-terminus, the 554-residue chain is MSPCKWLTMFLKGCWGKIANMNHLDSCFPLRYIIGRKKASKLLCTMDSGLKSDSHEVERSNFQLNKPEKSLKRYALLSFYVIILLAIPVWWKTTHYERSSLPFEDMENAPSTVQTHLRFSPTFRILDDKGNNLTKEVQKVLEAEPQIYSYNLKVLEDDPVDYRIVLRESTDLQWFWDENNFIIDTPSKGPSELAILIVNCLWEAFSPQVMEVWSKFTRFSSTVEPSRAETKRTVQFSPQYRVLLSLLVGEGNHEPINWDIENAIQKYFNPLIEQLASLAKLNIETQIQYFVEDAEAYIKDDKFCTKHADLPNLVNNFEKYLSFSPHIREPTIHFVLYVPSPQIQPLWLENEDSNIIPTNSMLLPQWGSITTINFNVTEKKLLHDVDLKDYFRVISRDLLLLLGINDVPVSSLSATLADRLLRQRIAESCIEASDTLQNLAKLVHSMQSMAVPKEIQMYVKDTLLSLDMAYKALSQNNLNEALSYSNNAFSKSQEALFHPSMVTTIYFPDESKYGIYAPLFAPILIPLLISFIKEVKDMLRERKLHRVANVPKPN.

Over 1–73 (MSPCKWLTMF…LNKPEKSLKR (73 aa)) the chain is Cytoplasmic. Residues 74–94 (YALLSFYVIILLAIPVWWKTT) form a helical membrane-spanning segment. Over 95–511 (HYERSSLPFE…VTTIYFPDES (417 aa)) the chain is Lumenal. Asn-132 and Asn-375 each carry an N-linked (GlcNAc...) asparagine glycan. The chain crosses the membrane as a helical span at residues 512–532 (KYGIYAPLFAPILIPLLISFI). Residues 533–554 (KEVKDMLRERKLHRVANVPKPN) lie on the Cytoplasmic side of the membrane.

Belongs to the PIGS family. As to quaternary structure, forms a complex with PIG-T homolog, PIG-U homolog and GPI8.

It is found in the endoplasmic reticulum membrane. It functions in the pathway glycolipid biosynthesis; glycosylphosphatidylinositol-anchor biosynthesis. In terms of biological role, component of the GPI transamidase complex. Involved in transfer of GPI to proteins. In Schizosaccharomyces pombe (strain 972 / ATCC 24843) (Fission yeast), this protein is GPI transamidase component PIG-S homolog (gpi17).